The following is a 315-amino-acid chain: T cell receptor beta chain MC.7.G5 (315 aa).

An N-terminal signal peptide occupies residues 1 to 21 (MTIRLLCYMGFYFLGAGLMEA). In terms of domain architecture, Ig-like V-type spans 22-114 (DIYQTPRYLV…TSQYLCASSE (93 aa)). The t cell receptor beta variable 25-1 stretch occupies residues 22–114 (DIYQTPRYLV…TSQYLCASSE (93 aa)). A disulfide bridge links Cys-42 with Cys-110. A CDR1 region spans residues 46-50 (MGHDK). The segment at 68-73 (SYGVNS) is CDR2. A glycan (N-linked (GlcNAc...) asparagine) is linked at Asn-72. The CDR3 stretch occupies residues 110 to 127 (CASSEARGLAEFTDTQYF). Residues 122-136 (TDTQYFGPGTRLTVL) are t cell receptor beta joining 2-3. Positions 138 to 315 (DLKNVFPPEV…AMVKRKDSRG (178 aa)) are t cell receptor beta constant 2. Positions 145–254 (PEVAVFEPSE…WTQDRAKPVT (110 aa)) constitute an Ig-like C1-type domain. Cysteines 167 and 232 form a disulfide. Asn-206 is a glycosylation site (N-linked (GlcNAc...) asparagine). The connecting peptide stretch occupies residues 267–281 (CGFTSESYQQGVLSA). A helical transmembrane segment spans residues 282-304 (TILYEILLGKATLYAVLVSALVL). Topologically, residues 305 to 315 (MAMVKRKDSRG) are cytoplasmic.

Disulfide-linked heterodimer with TRAV38-2DV8*01J31*01C*01 alpha chain. The alpha-beta TR associates with the transmembrane signaling CD3 coreceptor proteins to form the TR-CD3 (TCR). The assembly of alpha-beta TR heterodimers with CD3 occurs in the endoplasmic reticulum where a single alpha-beta TR heterodimer associates with one CD3D-CD3E heterodimer, one CD3G-CD3E heterodimer and one CD247 homodimer forming a stable octameric structure. CD3D-CD3E and CD3G-CD3E heterodimers preferentially associate with TR alpha and TR beta chains (via TM domain), respectively. The association of the CD247 homodimer is the last step of TCR assembly in the endoplasmic reticulum and is required for transport to the cell surface. In terms of tissue distribution, expressed in MR1-restricted CD8-positive T cells.

It localises to the cell membrane. Its function is as follows. The beta chain of TRAV38-2DV8*01J31*01C*01/TRBV25-1*01J2S3*01C2*01 alpha-beta T cell receptor (TR) clonotype that displays pan-cancer cell recognition via the invariant MR1 molecule. On CD8-positive T cell clone MC.7.G5, likely recognizes tumor-specific or -associated metabolite(s) essential for cancer cell survival, triggering killing of many cancer cell types including lung, melanoma, leukemia, colon, breast, prostate, bone and ovarian cancer cells. Mediates cancer cell cytotoxicity in an HLA-independent manner. Has no reactivity to healthy cells even stressed or infected by bacteria. Antigen recognition initiates TR-CD3 clustering on the cell surface and intracellular activation of LCK that phosphorylates the ITAM motifs of CD3G, CD3D, CD3E and CD247 enabling the recruitment of ZAP70. In turn, ZAP70 phosphorylates LAT, which recruits numerous signaling molecules to form the LAT signalosome. The LAT signalosome propagates signal branching to three major signaling pathways, the calcium, the mitogen-activated protein kinase (MAPK) kinase and the nuclear factor NF-kappa-B (NF-kB) pathways, leading to the mobilization of transcription factors that are critical for gene expression and essential for T cell differentiation into effector/memory T cells. This chain is T cell receptor beta chain MC.7.G5, found in Homo sapiens (Human).